Reading from the N-terminus, the 207-residue chain is Large ribosomal subunit protein uL4 (207 aa).

A disordered region spans residues 50 to 76 (AVKNRSAVSGGGRKPWKQKGTGRARQG).

This sequence belongs to the universal ribosomal protein uL4 family. As to quaternary structure, part of the 50S ribosomal subunit.

One of the primary rRNA binding proteins, this protein initially binds near the 5'-end of the 23S rRNA. It is important during the early stages of 50S assembly. It makes multiple contacts with different domains of the 23S rRNA in the assembled 50S subunit and ribosome. Its function is as follows. Forms part of the polypeptide exit tunnel. The chain is Large ribosomal subunit protein uL4 from Staphylococcus aureus (strain JH9).